Here is a 525-residue protein sequence, read N- to C-terminus: DNA damage-binding protein cmr1 (525 aa).

Positions 34–50 (TGVFTSNMPRGTSANQS) are enriched in polar residues. 3 disordered regions span residues 34–103 (TGVF…ERAK), 214–240 (DASQEKPTSAVKNEDDEDDEDDDDPDP), and 282–301 (TSSVEKYAPESTSDDVPISG). Residues 83–102 (EIAKRKADEEYDRRQEEERA) are compositionally biased toward basic and acidic residues. A WD 1 repeat occupies 182–223 (ITPERIYSMTFHPSEAKPVIFAGDKMGHLGILDASQEKPTSA). The segment covering 227 to 239 (EDDEDDEDDDDPD) has biased composition (acidic residues). 5 WD repeats span residues 247 to 287 (PHTR…SVEK), 339 to 379 (LSEK…HTDP), 384 to 425 (EHQS…SSWK), 448 to 491 (GRWV…LAQL), and 494 to 525 (DGITAVPAVAVFHRSKNWVAGGTASGKICLWM).

The protein belongs to the WD repeat DDB2/WDR76 family.

In terms of biological role, DNA-binding protein that binds to both single- and double-stranded DNA. Binds preferentially to UV-damaged DNA. May be involved in DNA-metabolic processes. This chain is DNA damage-binding protein cmr1, found in Emericella nidulans (strain FGSC A4 / ATCC 38163 / CBS 112.46 / NRRL 194 / M139) (Aspergillus nidulans).